Reading from the N-terminus, the 743-residue chain is Apo-petrobactin exporter (743 aa).

12 helical membrane-spanning segments follow: residues W20–V40, A199–Y219, I223–L243, A258–I278, G303–A323, V337–F357, W406–I426, D561–L581, I584–A604, M613–L633, A672–V692, and F694–V714.

The protein belongs to the resistance-nodulation-cell division (RND) (TC 2.A.6) family. MmpL subfamily.

It is found in the cell membrane. Exports the siderophore petrobactin. The protein is Apo-petrobactin exporter of Bacillus anthracis.